Here is a 105-residue protein sequence, read N- to C-terminus: BLOC-1-related complex subunit 7 (105 aa).

This sequence belongs to the BORCS7 family. In terms of assembly, component of the BLOC-one-related complex (BORC) which is composed of BLOC1S1, BLOC1S2, BORCS5, BORCS6, BORCS7, BORCS8, KXD1 and SNAPIN.

It localises to the lysosome membrane. Functionally, as part of the BORC complex may play a role in lysosomes movement and localization at the cell periphery. Associated with the cytosolic face of lysosomes, the BORC complex may recruit ARL8B and couple lysosomes to microtubule plus-end-directed kinesin motor. In Mus musculus (Mouse), this protein is BLOC-1-related complex subunit 7.